The sequence spans 143 residues: Sirohydrochlorin cobaltochelatase (143 aa).

H9 functions as the Proton acceptor in the catalytic mechanism. H9 is a binding site for Co(2+). H9 is a Ni(2+) binding site. Residues E45 and 70-75 (LAHGVH) each bind substrate. Residue H75 participates in Co(2+) binding. H75 lines the Ni(2+) pocket.

Belongs to the CbiX family. CbiXS subfamily. In terms of assembly, homotetramer; dimer of dimers.

The catalysed reaction is Co-sirohydrochlorin + 2 H(+) = sirohydrochlorin + Co(2+). It catalyses the reaction Ni-sirohydrochlorin + 2 H(+) = sirohydrochlorin + Ni(2+). Its pathway is cofactor biosynthesis; adenosylcobalamin biosynthesis; cob(II)yrinate a,c-diamide from sirohydrochlorin (anaerobic route): step 1/10. Functionally, catalyzes the insertion of Co(2+) into sirohydrochlorin as part of the anaerobic pathway to cobalamin biosynthesis. Involved in the biosynthesis of the unique nickel-containing tetrapyrrole coenzyme F430, the prosthetic group of methyl-coenzyme M reductase (MCR), which plays a key role in methanogenesis and anaerobic methane oxidation. Catalyzes the insertion of Ni(2+) into sirohydrochlorin to yield Ni-sirohydrochlorin. This Methanopyrus kandleri (strain AV19 / DSM 6324 / JCM 9639 / NBRC 100938) protein is Sirohydrochlorin cobaltochelatase.